A 651-amino-acid polypeptide reads, in one-letter code: Acetyl-coenzyme A synthetase (651 aa).

CoA-binding positions include 189–192 (RGGK), Thr-311, and Asn-335. ATP-binding positions include 387–389 (GEP), 411–416 (DTWWQT), Asp-500, and Arg-515. Position 523 (Ser-523) interacts with CoA. Arg-526 contacts ATP. 3 residues coordinate Mg(2+): Val-537, His-539, and Val-542. Arg-584 lines the CoA pocket. Lys-609 bears the N6-acetyllysine mark.

Belongs to the ATP-dependent AMP-binding enzyme family. Requires Mg(2+) as cofactor. In terms of processing, acetylated. Deacetylation by the SIR2-homolog deacetylase activates the enzyme.

It carries out the reaction acetate + ATP + CoA = acetyl-CoA + AMP + diphosphate. Functionally, catalyzes the conversion of acetate into acetyl-CoA (AcCoA), an essential intermediate at the junction of anabolic and catabolic pathways. AcsA undergoes a two-step reaction. In the first half reaction, AcsA combines acetate with ATP to form acetyl-adenylate (AcAMP) intermediate. In the second half reaction, it can then transfer the acetyl group from AcAMP to the sulfhydryl group of CoA, forming the product AcCoA. The polypeptide is Acetyl-coenzyme A synthetase (Rhizobium etli (strain ATCC 51251 / DSM 11541 / JCM 21823 / NBRC 15573 / CFN 42)).